The sequence spans 97 residues: uncharacterized protein (97 aa).

A signal peptide spans 1–21 (MNKKFSISLLSTILAFLLVLG). The N-palmitoyl cysteine moiety is linked to residue Cys-22. A lipid anchor (S-diacylglycerol cysteine) is attached at Cys-22.

This sequence to B.burgdorferi BBD15.

It localises to the cell membrane. This is an uncharacterized protein from Borreliella burgdorferi (strain ATCC 35210 / DSM 4680 / CIP 102532 / B31) (Borrelia burgdorferi).